A 1225-amino-acid chain; its full sequence is Structural maintenance of chromosomes protein 1 (1225 aa).

Residue 33–40 (GPNGSGKS) participates in ATP binding. The stretch at 173-489 (SGSIQYKKEY…SANNQEYDLN (317 aa)) forms a coiled coil. Residues 527-641 (PGVKGLVHDL…CNTLNIAKDL (115 aa)) enclose the SMC hinge domain. Positions 679–1063 (KEEYQSLMSL…LKIKKKRKEL (385 aa)) form a coiled coil. The Nuclear localization signal signature appears at 1057–1061 (KKKRK).

This sequence belongs to the SMC family. SMC1 subfamily. Cohesin complexes are composed of the SMC1 and SMC3 heterodimer attached via their SMC hinge domain, MCD1/SCC1 which link them, and IRR1/SCC3, which interacts with MCD1. The cohesin complex also interacts with SCC2, which is required for its association with chromosomes.

Its subcellular location is the nucleus. The protein localises to the chromosome. In terms of biological role, involved in chromosome cohesion during cell cycle and in DNA repair. Central component of cohesin complex. The cohesin complex is required for the cohesion of sister chromatids after DNA replication. The cohesin complex apparently forms a large proteinaceous ring within which sister chromatids can be trapped. At anaphase, the complex is cleaved and dissociates from chromatin, allowing sister chromatids to segregate. In Saccharomyces cerevisiae (strain ATCC 204508 / S288c) (Baker's yeast), this protein is Structural maintenance of chromosomes protein 1 (SMC1).